The primary structure comprises 433 residues: Type I acyl-CoA thioesterase mpaH (433 aa).

The tract at residues 58–246 (HGVGLPKELY…VKARFDAAAD (189 aa)) is abhydrolase domain. Val60 provides a ligand contact to substrate. The Nucleophile role is filled by Ser139. Phe140 serves as a coordination point for substrate. Catalysis depends on residues Asp163 and His365.

Belongs to the AB hydrolase superfamily. MpaH hydrolase family. Homodimer.

It is found in the peroxisome matrix. The enzyme catalyses mycophenolyl-CoA + H2O = mycophenolate + CoA + H(+). Its pathway is secondary metabolite biosynthesis; terpenoid biosynthesis. Its function is as follows. Type I acyl-CoA thioesterase; part of the gene cluster that mediates the biosynthesis of mycophenolic acid (MPA), the first isolated antibiotic natural product in the world obtained from a culture of Penicillium brevicompactum in 1893. MpaH acts as a peroxisomal acyl-CoA hydrolase that converts MPA-CoA into the final product MPA. The first step of the pathway is the synthesis of 5-methylorsellinic acid (5MOA) by the cytosolic polyketide synthase mpaC. 5MOA is then converted to the phthalide compound 5,7-dihydroxy-4,6-dimethylphthalide (DHMP) by the endoplasmic reticulum-bound cytochrome P450 monooxygenase mpaDE. MpaDE first catalyzes hydroxylation of 5-MOA to 4,6-dihydroxy-2-(hydroxymethyl)-3-methylbenzoic acid (DHMB). MpaDE then acts as a lactone synthase that catalyzes the ring closure to convert DHMB into DHMP. The next step is the prenylation of DHMP by the Golgi apparatus-associated prenyltransferase mpaA to yield farnesyl-DHMP (FDHMP). The ER-bound oxygenase mpaB then mediates the oxidative cleavage the C19-C20 double bond in FDHMP to yield FDHMP-3C via a mycophenolic aldehyde intermediate. The O-methyltransferase mpaG catalyzes the methylation of FDHMP-3C to yield MFDHMP-3C. After the cytosolic methylation of FDHMP-3C, MFDHMP-3C enters into peroxisomes probably via free diffusion due to its low molecular weight. Upon a peroxisomal CoA ligation reaction, catalyzed by a beta-oxidation component enzyme acyl-CoA ligase ACL891, MFDHMP-3C-CoA would then be restricted to peroxisomes for the following beta-oxidation pathway steps. The peroxisomal beta-oxidation machinery than converts MFDHMP-3C-CoA into MPA_CoA, via a beta-oxidation chain-shortening process. Finally mpaH acts as a peroxisomal acyl-CoA hydrolase with high substrate specificity toward MPA-CoA to release the final product MPA. The chain is Type I acyl-CoA thioesterase mpaH from Penicillium roqueforti (strain FM164).